The chain runs to 153 residues: Small ribosomal subunit protein uS12m (153 aa).

The transit peptide at 1–20 (MLSRFMSNTWCTPLRQAQRL) directs the protein to the mitochondrion.

This sequence belongs to the universal ribosomal protein uS12 family. In terms of assembly, component of the mitochondrial small ribosomal subunit (mt-SSU). Mature yeast 74S mitochondrial ribosomes consist of a small (37S) and a large (54S) subunit. The 37S small subunit contains a 15S ribosomal RNA (15S mt-rRNA) and 34 different proteins. The 54S large subunit contains a 21S rRNA (21S mt-rRNA) and 46 different proteins. uS12m forms part of the decoding center of the mt-SSU.

It localises to the mitochondrion. In terms of biological role, component of the mitochondrial ribosome (mitoribosome), a dedicated translation machinery responsible for the synthesis of mitochondrial genome-encoded proteins, including at least some of the essential transmembrane subunits of the mitochondrial respiratory chain. The mitoribosomes are attached to the mitochondrial inner membrane and translation products are cotranslationally integrated into the membrane. uS12m is required for respiratory growth. This is Small ribosomal subunit protein uS12m (MRPS12) from Saccharomyces cerevisiae (strain ATCC 204508 / S288c) (Baker's yeast).